A 122-amino-acid polypeptide reads, in one-letter code: Proteasome assembly chaperone 3 (122 aa).

N-acetylmethionine is present on Met1.

The protein belongs to the PSMG3 family. As to quaternary structure, homodimer. Interacts directly with alpha and beta subunits of the 20S proteasome but dissociates before the formation of half-proteasomes, probably upon recruitment of POMP. Interacts with PSMG4.

Functionally, chaperone protein which promotes assembly of the 20S proteasome. May cooperate with PSMG1-PSMG2 heterodimers to orchestrate the correct assembly of proteasomes. This chain is Proteasome assembly chaperone 3 (Psmg3), found in Mus musculus (Mouse).